Here is a 473-residue protein sequence, read N- to C-terminus: Photosystem II CP43 reaction center protein (473 aa).

A propeptide spanning residues 1–14 is cleaved from the precursor; the sequence is MKTLYSLRRFYHVE. An N-acetylthreonine modification is found at threonine 15. Threonine 15 bears the Phosphothreonine mark. The next 5 helical transmembrane spans lie at 69–93, 134–155, 178–200, 255–275, and 291–312; these read LFEV…PHLA, LLGP…KDRN, KALY…RKIT, KPFA…LSYS, and WFNN…ASQA. Residue glutamate 367 participates in [CaMn4O5] cluster binding. A helical membrane pass occupies residues 447 to 471; sequence RARAAAAGFEKGIDRDFEPVLSMTP.

The protein belongs to the PsbB/PsbC family. PsbC subfamily. In terms of assembly, PSII is composed of 1 copy each of membrane proteins PsbA, PsbB, PsbC, PsbD, PsbE, PsbF, PsbH, PsbI, PsbJ, PsbK, PsbL, PsbM, PsbT, PsbX, PsbY, PsbZ, Psb30/Ycf12, at least 3 peripheral proteins of the oxygen-evolving complex and a large number of cofactors. It forms dimeric complexes. The cofactor is Binds multiple chlorophylls and provides some of the ligands for the Ca-4Mn-5O cluster of the oxygen-evolving complex. It may also provide a ligand for a Cl- that is required for oxygen evolution. PSII binds additional chlorophylls, carotenoids and specific lipids..

Its subcellular location is the plastid. The protein localises to the chloroplast thylakoid membrane. Functionally, one of the components of the core complex of photosystem II (PSII). It binds chlorophyll and helps catalyze the primary light-induced photochemical processes of PSII. PSII is a light-driven water:plastoquinone oxidoreductase, using light energy to abstract electrons from H(2)O, generating O(2) and a proton gradient subsequently used for ATP formation. This is Photosystem II CP43 reaction center protein from Draba nemorosa (Woodland whitlowgrass).